A 187-amino-acid polypeptide reads, in one-letter code: Protein TfaD (187 aa).

It in the C-terminal section; belongs to the tfa family.

The chain is Protein TfaD (tfaD) from Escherichia coli (strain K12).